The primary structure comprises 471 residues: Glutamate--tRNA ligase (471 aa).

The 'HIGH' region signature appears at 9–19 (PSPTGYLHVGG). Cys98, Cys100, Cys125, and His127 together coordinate Zn(2+). The 'KMSKS' region signature appears at 237–241 (KLSKR). Residue Lys240 coordinates ATP.

The protein belongs to the class-I aminoacyl-tRNA synthetase family. Glutamate--tRNA ligase type 1 subfamily. In terms of assembly, monomer. Zn(2+) serves as cofactor.

It is found in the cytoplasm. It carries out the reaction tRNA(Glu) + L-glutamate + ATP = L-glutamyl-tRNA(Glu) + AMP + diphosphate. Catalyzes the attachment of glutamate to tRNA(Glu) in a two-step reaction: glutamate is first activated by ATP to form Glu-AMP and then transferred to the acceptor end of tRNA(Glu). The sequence is that of Glutamate--tRNA ligase from Escherichia coli O157:H7.